We begin with the raw amino-acid sequence, 665 residues long: Prelamin-A/C (665 aa).

M1 bears the N-acetylmethionine mark. The disordered stretch occupies residues 1 to 25 (METPSQRRATRSGAQASSTPLSPTR). The segment at 1–33 (METPSQRRATRSGAQASSTPLSPTRITRLQEKE) is head. An interaction with MLIP region spans residues 1 to 130 (METPSQRRAT…TKKEGDLLAA (130 aa)). Position 3 is a phosphothreonine (T3). S5 carries the phosphoserine modification. T10 is modified (phosphothreonine). Residues S12 and S18 each carry the phosphoserine modification. T19 bears the Phosphothreonine mark. The residue at position 22 (S22) is a Phosphoserine. Residues 31-387 (EKEDLQELND…KLLEGEEERL (357 aa)) form the IF rod domain. K32 bears the N6-acetyllysine; alternate mark. K32 is subject to N6-succinyllysine; alternate. K32 participates in a covalent cross-link: Glycyl lysine isopeptide (Lys-Gly) (interchain with G-Cter in SUMO2); alternate. The coil 1A stretch occupies residues 34–70 (DLQELNDRLAVYIDRVRSLETENAGLRLRITESEEVV). Residues S51, S66, and S71 each carry the phosphoserine modification. Positions 71 to 80 (SREVSGIKAA) are linker 1. Residues K78 and K97 each carry the N6-acetyllysine modification. The segment at 81–218 (YEAELGDARK…NIYSEELRET (138 aa)) is coil 1B. K97 participates in a covalent cross-link: Glycyl lysine isopeptide (Lys-Gly) (interchain with G-Cter in SUMO2). S107 bears the Phosphoserine mark. Residues K108, K114, K123, K135, K144, and K155 each carry the N6-acetyllysine modification. The residue at position 171 (K171) is an N6-acetyllysine; alternate. K171 bears the N6-succinyllysine; alternate mark. K171 is covalently cross-linked (Glycyl lysine isopeptide (Lys-Gly) (interchain with G-Cter in SUMO2); alternate). Residues K180, K201, and K208 each carry the N6-acetyllysine modification. K201 participates in a covalent cross-link: Glycyl lysine isopeptide (Lys-Gly) (interchain with G-Cter in SUMO2); alternate. K201 is covalently cross-linked (Glycyl lysine isopeptide (Lys-Gly) (interchain with G-Cter in SUMO); alternate). Residue K208 forms a Glycyl lysine isopeptide (Lys-Gly) (interchain with G-Cter in SUMO2) linkage. The residue at position 212 (S212) is a Phosphoserine. Glycyl lysine isopeptide (Lys-Gly) (interchain with G-Cter in SUMO2) cross-links involve residues K219 and K233. Positions 219–242 (KRRHETRLVEIDNGKQREFESRLA) are linker 2. N6-acetyllysine occurs at positions 233, 260, 265, and 270. The segment at 243-383 (DALQELRAQH…HAYRKLLEGE (141 aa)) is coil 2. K260 participates in a covalent cross-link: Glycyl lysine isopeptide (Lys-Gly) (interchain with G-Cter in SUMO2); alternate. Residue K270 forms a Glycyl lysine isopeptide (Lys-Gly) (interchain with G-Cter in SUMO2); alternate linkage. S277, S282, S301, and S307 each carry phosphoserine. A Glycyl lysine isopeptide (Lys-Gly) (interchain with G-Cter in SUMO2); alternate cross-link involves residue K311. N6-acetyllysine occurs at positions 311, 316, and 341. Residues K366 and K378 each participate in a glycyl lysine isopeptide (Lys-Gly) (interchain with G-Cter in SUMO2) cross-link. Positions 384–442 (EERLRLSPSPTSQRSRGRASSHSSQSQGGGSVTKKRKLESSESRSSFSQHARTSGRVAV) are disordered. The segment at 384–665 (EERLRLSPSP…SQSSQNCSIM (282 aa)) is tail. S390, S392, S395, S398, S403, S404, S406, S407, S409, and S414 each carry phosphoserine. S392 carries the phosphoserine; by CDK1 modification. Over residues 395-409 (SQRSRGRASSHSSQS) the composition is skewed to low complexity. Phosphothreonine is present on T416. Residues K417 and K420 each carry the N6-acetyllysine modification. Glycyl lysine isopeptide (Lys-Gly) (interchain with G-Cter in SUMO2) cross-links involve residues K417 and K420. The Nuclear localization signal signature appears at 417–422 (KKRKLE). Residues S423, S426, S429, and S431 each carry the phosphoserine modification. The 118-residue stretch at 428 to 545 (SSFSQHARTS…EEVAMRKLVR (118 aa)) folds into the LTD domain. Residue K450 forms a Glycyl lysine isopeptide (Lys-Gly) (interchain with G-Cter in SUMO2); alternate linkage. An N6-acetyllysine mark is found at K450 and K457. 3 positions are modified to phosphoserine: S458, E460, and S463. K486 is modified (N6-acetyllysine). K486 is covalently cross-linked (Glycyl lysine isopeptide (Lys-Gly) (interchain with G-Cter in SUMO2)). A Phosphothreonine modification is found at T496. Residue S500 is modified to Phosphoserine. A phosphothreonine mark is found at T505 and T510. 2 positions are modified to phosphoserine: S533 and S546. Residue T548 is modified to Phosphothreonine. Residues 553 to 577 (NEDDDEDGEELLHHHRGSHCSGSGD) are disordered. Phosphoserine occurs at positions 570, 572, and 573. A Glycyl lysine isopeptide (Lys-Gly) (interchain with G-Cter in SUMO2); alternate cross-link involves residue K599. K599 participates in a covalent cross-link: Glycyl lysine isopeptide (Lys-Gly) (interchain with G-Cter in SUMO1); alternate. Phosphoserine occurs at positions 613, 614, 617, and 620. Residues S626 and S629 are each glycosylated (O-linked (GlcNAc) serine). Phosphoserine is present on residues S629, S633, S637, and S653. The propeptide at 648–662 (LLGNSSPRSQSSQNC) is removed in Lamin-A/C form. C662 carries the cysteine methyl ester modification. Residue C662 is the site of S-farnesyl cysteine attachment. The propeptide at 663-665 (SIM) is removed in Prelamin-A/C form and in Lamin-A/C form.

This sequence belongs to the intermediate filament family. Homodimer of lamin A and lamin C. Lamin dimers then assemble into dimeric head-to-tail polymers. Ultimately, two head-to-tail polymers assemble laterally into a protofilament with a uniformly shaped rod of 3.5 nm in diameter. Interacts with lamin-associated polypeptides IA, IB and TMPO-alpha, RB1 and with emerin. Proteolytically processed isoform A interacts with NARF. Interacts with SREBF1, SREBF2, SUN1, SUN2 and TMEM43. Interacts with TMEM201. Prelamin-A/C interacts with EMD. Interacts with DMPK; may regulate nuclear envelope stability. Interacts with MLIP. Interacts with SUV39H1; the interaction increases stability of SUV39H1. Interacts with ITSN1 isoform 2. Interacts with IFFO1; the interaction forms an interior nucleoskeleton and the recruitment to DNA double-strand breaks. In terms of assembly, interacts with EMD. As to quaternary structure, interacts (via C-terminus) with LEMD2 (via N-terminus) (in vitro). In terms of processing, proteolytic cleavage of the C-terminal of 18 residues of prelamin-A/C results in the production of lamin-A/C. The prelamin-A/C maturation pathway includes farnesylation of CAAX motif by protein farnesyltransferase (FNTA and FNTB), removal of the last three amino acids (-AAX) by RCE1/FACE2 and/or ZMPSTE24, methylation of the C-terminal cysteine by ICMT and endoproteolytic removal of the last 15 C-terminal amino acids by ZMPSTE24. Proteolytic cleavage requires prior farnesylation and methylation, and absence of these blocks cleavage. Post-translationally, farnesylation of prelamin-A/C facilitates nuclear envelope targeting. Phosphorylation plays a key role in lamin organization, subcellular localization and nuclear envelope disintegration. Phosphorylation by CDK1 at Ser-22 and Ser-392 at the onset of mitosis drives lamin disassembly and nuclear envelope breakdown. Phosphorylation at Ser-22 and Ser-392 during interphase promotes localization to the nucleoplasm and regulates lamina assembly. Phosphorylation at Ser-22, Ser-392 and Ser-629 during interphase causes redistribution between the nucleus and the cytoplasm. Phosphorylation at Ser-22 by CDK1 regulates matrix stiffness. Phosphorylation status of Ser-22 determines its localization between double-strand break (DSB) sites and the nuclear matrix. Phosphorylated by ATR at Ser-282 in response to DNA damage, leading to lamin disassembly and nuclear envelope rupture. Phosphorylation also regulates stability in micronuclei arising from genome instability: phosphorylation at Ser-395 by ATR in response to genome instability and double-stranded DNA breaks primes LMNA for subsequent phosphorylation at Ser-392 by CDK1 and micronuclei envelope rupture. The rupture of micronuclear envelope triggers the cGAS-STING pathway thereby activating the type I interferon response and innate immunity. In terms of processing, isoform C is phosphorylated on Ser-392, Ser-407 and Ser-409 at interphase. Post-translationally, acetylation by KAT8 is required for nuclear architecture. Sumoylation is necessary for the localization to the nuclear envelope. In terms of processing, the N-terminus is blocked. In terms of tissue distribution, expressed in liver and in bone marrow (at protein level). Expressed in cardiomyocytes. As to expression, specifically expressed in germ cells.

It localises to the nucleus lamina. It is found in the nucleus envelope. The protein resides in the nucleus. Its subcellular location is the nucleoplasm. The protein localises to the nucleus matrix. In terms of biological role, lamins are intermediate filament proteins that assemble into a filamentous meshwork, and which constitute the major components of the nuclear lamina, a fibrous layer on the nucleoplasmic side of the inner nuclear membrane. Lamins provide a framework for the nuclear envelope, bridging the nuclear envelope and chromatin, thereby playing an important role in nuclear assembly, chromatin organization, nuclear membrane and telomere dynamics. Lamin A and C also regulate matrix stiffness by conferring nuclear mechanical properties. The structural integrity of the lamina is strictly controlled by the cell cycle, as seen by the disintegration and formation of the nuclear envelope in prophase and telophase, respectively. Lamin A and C are present in equal amounts in the lamina of mammals. Also invoved in DNA repair: recruited by DNA repair proteins XRCC4 and IFFO1 to the DNA double-strand breaks (DSBs) to prevent chromosome translocation by immobilizing broken DNA ends. Required for normal development of peripheral nervous system and skeletal muscle and for muscle satellite cell proliferation. Required for osteoblastogenesis and bone formation. Also prevents fat infiltration of muscle and bone marrow, helping to maintain the volume and strength of skeletal muscle and bone. Required for cardiac homeostasis. Functionally, prelamin-A/C can accelerate smooth muscle cell senescence. It acts to disrupt mitosis and induce DNA damage in vascular smooth muscle cells (VSMCs), leading to mitotic failure, genomic instability, and premature senescence. Isoform C2 may have a role in determining the organization of nuclear and chromosomal structures during spermatogenesis. This Mus musculus (Mouse) protein is Prelamin-A/C (Lmna).